A 1196-amino-acid polypeptide reads, in one-letter code: DNA excision repair protein ERCC-5 homolog (1196 aa).

The tract at residues 1–78 (MGVQGLWKLL…RIRPIFVFDG (78 aa)) is N-domain. Asp30 contributes to the Mg(2+) binding site. Positions 31–67 (ISIWLNQAVKGARDRQGNAIQNAHLLTLFHRLCKLLF) are DNA-binding; may bind to the undamaged single-strand DNA of the DNA repair bubble. A Mg(2+)-binding site is contributed by Asp77. The segment at 79-818 (EAPLLKRQTL…LQLFGIPYIV (740 aa)) is spacer region. Disordered regions lie at residues 152–176 (PLED…MNQK), 302–321 (KQEE…NSSQ), 629–661 (QTTQ…SSAM), and 722–758 (AVEE…DDVS). Acidic residues predominate over residues 154 to 168 (EDNENNSSEEEEERE). The segment covering 311–321 (PPQSITFNSSQ) has biased composition (polar residues). Residues 722 to 731 (AVEEGNSGSQ) are compositionally biased toward polar residues. Positions 734–755 (PLEHDSGEPHEQSNSEESKDLD) are enriched in basic and acidic residues. Residues 819-914 (APMEAEAQCA…VSAMEILNEF (96 aa)) form an I-domain region. Mg(2+) contacts are provided by Glu822, Glu824, Asp843, and Asp845. Residues 853–869 (HVYKNFFSQNKHVEYYQ) are DNA-binding; may bind to the undamaged single-strand DNA of the DNA repair bubble. The tract at residues 881–913 (RSKLINLAYLLGSDYTEGIPTVGYVSAMEILNE) is DNA-binding; H2TH (helix-2turn-helix) motif which binds double-stranded DNA. Residue Asp894 coordinates Mg(2+). Positions 945-951 (TKVKKKL) are DNA-binding; may bind double-stranded DNA. A disordered region spans residues 1075–1196 (CTNQRKGQKT…KTMKETVKRK (122 aa)). Positions 1079–1095 (RKGQKTNTKSQGTKRRK) match the Nuclear localization signal 1 motif. Residues 1119-1130 (SSKAYSSDGSSS) show a composition bias toward low complexity. Residues 1142–1158 (KQSQSGIVGRQKASNKV) show a composition bias toward polar residues. The Nuclear localization signal 2 motif lies at 1179–1196 (FQGKKTKSKTMKETVKRK).

It belongs to the XPG/RAD2 endonuclease family. XPG subfamily. As to quaternary structure, monomer. Homodimer. Mg(2+) is required as a cofactor.

Its subcellular location is the nucleus. It is found in the chromosome. Its function is as follows. Single-stranded structure-specific DNA endonuclease involved in DNA excision repair. Makes the 3'incision in DNA nucleotide excision repair (NER). Binds and bends DNA repair bubble substrate and breaks base stacking at the single-strand/double-strand DNA junction of the DNA bubble. Plays a role in base excision repair (BER) by promoting the binding of DNA glycosylase to its substrate and increasing DNA glycosylase catalytic activity that removes oxidized pyrimidines from DNA. Involved in transcription-coupled nucleotide excision repair (TCR) which allows RNA polymerase II-blocking lesions to be rapidly removed from the transcribed strand of active genes. Required for DNA replication fork maintenance and preservation of genomic stability. Involved in homologous recombination repair (HRR) induced by DNA replication stress. During HRR, binds to the replication fork with high specificity and stabilizes it. This Xenopus laevis (African clawed frog) protein is DNA excision repair protein ERCC-5 homolog (ercc5).